The primary structure comprises 362 residues: Putative protein ARB2BP (362 aa).

Residues Ile-229 to Leu-245 traverse the membrane as a helical segment.

Belongs to the ARB2 family.

The protein localises to the membrane. The polypeptide is Putative protein ARB2BP (Homo sapiens (Human)).